Reading from the N-terminus, the 363-residue chain is D-proline dehydrogenase (363 aa).

Position 3–17 (3–17 (VAIVGGGIIGLFTAY)) interacts with FAD.

It belongs to the DadA oxidoreductase family. In terms of assembly, homotetramer. It depends on FAD as a cofactor.

It is found in the cell membrane. It catalyses the reaction D-proline + A = 1-pyrroline-2-carboxylate + AH2. Its function is as follows. Catalyzes the dehydrogenation of D-proline. Can also use other D-amino acids, but with lower efficiency. This chain is D-proline dehydrogenase (dpdh), found in Pyrobaculum islandicum (strain DSM 4184 / JCM 9189 / GEO3).